Consider the following 642-residue polypeptide: Threonine--tRNA ligase (642 aa).

Positions 1–61 constitute a TGS domain; it reads MPVITLPDGS…ENDTQLSIIT (61 aa). A catalytic region spans residues 243 to 534; the sequence is DHRKIGKQLD…LTEEFAGFFP (292 aa). Lys286 carries the post-translational modification N6-acetyllysine. Zn(2+) is bound by residues Cys334, His385, and His511.

This sequence belongs to the class-II aminoacyl-tRNA synthetase family. As to quaternary structure, homodimer. The cofactor is Zn(2+).

It localises to the cytoplasm. The enzyme catalyses tRNA(Thr) + L-threonine + ATP = L-threonyl-tRNA(Thr) + AMP + diphosphate + H(+). Its function is as follows. Catalyzes the attachment of threonine to tRNA(Thr) in a two-step reaction: L-threonine is first activated by ATP to form Thr-AMP and then transferred to the acceptor end of tRNA(Thr). Also edits incorrectly charged L-seryl-tRNA(Thr). The protein is Threonine--tRNA ligase of Shigella dysenteriae serotype 1 (strain Sd197).